Here is a 251-residue protein sequence, read N- to C-terminus: uncharacterized protein (251 aa).

The next 7 membrane-spanning stretches (helical) occupy residues 48–68 (WMVG…VELI), 88–108 (VLWG…LVAN), 110–130 (IPLL…FIWV), 132–152 (AMVW…GSSF), 158–178 (IGVS…GLFV), 184–204 (IIGC…MPVL), and 209–229 (GVSW…AYLL).

The protein to M.tuberculosis Rv1337.

Its subcellular location is the cell membrane. This is an uncharacterized protein from Mycobacterium leprae (strain TN).